The sequence spans 159 residues: Nascent polypeptide-associated complex subunit beta (159 aa).

2 disordered regions span residues 1–39 (MDME…GMDD) and 124–159 (QSMQ…DKVE). The span at 23–32 (TPRRKVKNVH) shows a compositional bias: basic residues. One can recognise an NAC-A/B domain in the interval 36 to 101 (GMDDKKLQTS…GEDKELTELV (66 aa)). Positions 136–153 (KDDEEDDDDIPDLVEGEN) are enriched in acidic residues.

Belongs to the NAC-beta family. In terms of assembly, part of the nascent polypeptide-associated complex (NAC), consisting of EGD2 and EGD1. NAC associates with ribosomes via EGD1.

Its subcellular location is the cytoplasm. The protein localises to the nucleus. Functionally, component of the nascent polypeptide-associated complex (NAC), a dynamic component of the ribosomal exit tunnel, protecting the emerging polypeptides from interaction with other cytoplasmic proteins to ensure appropriate nascent protein targeting. The NAC complex also promotes mitochondrial protein import by enhancing productive ribosome interactions with the outer mitochondrial membrane and blocks the inappropriate interaction of ribosomes translating non-secretory nascent polypeptides with translocation sites in the membrane of the endoplasmic reticulum. EGD1 may act as a transcription factor that exert a negative effect on the expression of several genes that are transcribed by RNA polymerase II. This Sclerotinia sclerotiorum (strain ATCC 18683 / 1980 / Ss-1) (White mold) protein is Nascent polypeptide-associated complex subunit beta (egd1).